Reading from the N-terminus, the 82-residue chain is Putative defensin-like protein 191 (82 aa).

Residues 1-28 (MAKSVNATGFITYMVIFLILTGISRVKA) form the signal peptide. 4 disulfides stabilise this stretch: cysteine 33–cysteine 79, cysteine 46–cysteine 65, cysteine 51–cysteine 74, and cysteine 55–cysteine 76.

The protein belongs to the DEFL family.

The protein resides in the secreted. In Arabidopsis thaliana (Mouse-ear cress), this protein is Putative defensin-like protein 191.